A 141-amino-acid polypeptide reads, in one-letter code: Hemoglobin subunit alpha-D (141 aa).

The Globin domain maps to 1 to 141 (MLTAEDKKLI…VAAVLAGKYR (141 aa)). Residues His-58 and His-87 each coordinate heme b.

The protein belongs to the globin family. Heterotetramer of two alpha-D chains and two beta chains. In terms of tissue distribution, red blood cells.

Functionally, involved in oxygen transport from the lung to the various peripheral tissues. This Coturnix japonica (Japanese quail) protein is Hemoglobin subunit alpha-D (HBAD).